The chain runs to 633 residues: Chaperone protein HtpG (633 aa).

The segment at methionine 1–arginine 341 is a; substrate-binding. Residues glutamate 342–arginine 562 form a b region. The segment at leucine 563 to alanine 633 is c.

The protein belongs to the heat shock protein 90 family. As to quaternary structure, homodimer.

Its subcellular location is the cytoplasm. Molecular chaperone. Has ATPase activity. The chain is Chaperone protein HtpG from Cupriavidus necator (strain ATCC 17699 / DSM 428 / KCTC 22496 / NCIMB 10442 / H16 / Stanier 337) (Ralstonia eutropha).